The sequence spans 220 residues: Charged multivesicular body protein 2a (220 aa).

Met-1 is subject to N-acetylmethionine. Coiled coils occupy residues 12–52 and 195–220; these read EELL…KMAK and RAAE…LRRD. The MIT-interacting motif signature appears at 208–218; the sequence is ADLEERLKNLR.

It belongs to the SNF7 family. As to quaternary structure, probable core component of the endosomal sorting required for transport complex III (ESCRT-III). ESCRT-III components are thought to multimerize to form a flat lattice on the perimeter membrane of the endosome.

Its subcellular location is the late endosome membrane. It localises to the cytoplasm. Its function is as follows. Probable core component of the endosomal sorting required for transport complex III (ESCRT-III) which is involved in multivesicular bodies (MVBs) formation and sorting of endosomal cargo proteins into MVBs. MVBs contain intraluminal vesicles (ILVs) that are generated by invagination and scission from the limiting membrane of the endosome and mostly are delivered to lysosomes enabling degradation of membrane proteins, such as stimulated growth factor receptors, lysosomal enzymes and lipids. This is Charged multivesicular body protein 2a (CHMP2A) from Gallus gallus (Chicken).